Here is a 128-residue protein sequence, read N- to C-terminus: Sulfurtransferase TusD (128 aa).

The Cysteine persulfide intermediate role is filled by Cys-78.

The protein belongs to the DsrE/TusD family. In terms of assembly, heterohexamer, formed by a dimer of trimers. The hexameric TusBCD complex contains 2 copies each of TusB, TusC and TusD. The TusBCD complex interacts with TusE.

It is found in the cytoplasm. In terms of biological role, part of a sulfur-relay system required for 2-thiolation of 5-methylaminomethyl-2-thiouridine (mnm(5)s(2)U) at tRNA wobble positions. Accepts sulfur from TusA and transfers it in turn to TusE. The protein is Sulfurtransferase TusD of Escherichia coli O127:H6 (strain E2348/69 / EPEC).